The following is a 331-amino-acid chain: UPF0324 membrane protein SAS0317 (331 aa).

The next 11 helical transmembrane spans lie at 9 to 26 (FMIGLTLTFIVALFSFLA), 31 to 48 (ILDKVGALTIAILIAILY), 69 to 88 (LLRFAIILYGLKLNIFDIIG), 93 to 115 (LLAIDVGVVIFSIVMMLFVNKLL), 122 to 144 (ALLLGVGTGVCGAAAIAAVAPIF), 154 to 176 (SIGIIALIGTIFSLIYTAIYAIF), 183 to 202 (YGAWSGVSLHEIAHVVLAGG), 217 to 234 (LGRVFLLIPLTIVLILIM), 247 to 269 (ISIPYFLIGFVIMALVNTYVTIP), 273 to 295 (LNILNTVSTICLLMAMVALGLNV), and 308 to 330 (LMTIIITSICLSSLAFIVVHWLY).

The protein belongs to the UPF0324 family.

The protein resides in the cell membrane. This chain is UPF0324 membrane protein SAS0317, found in Staphylococcus aureus (strain MSSA476).